The sequence spans 331 residues: Large ribosomal subunit protein uL3 (331 aa).

This sequence belongs to the universal ribosomal protein uL3 family. As to quaternary structure, part of the 50S ribosomal subunit. Forms a cluster with proteins L14 and L24e.

Its function is as follows. One of the primary rRNA binding proteins, it binds directly near the 3'-end of the 23S rRNA, where it nucleates assembly of the 50S subunit. The polypeptide is Large ribosomal subunit protein uL3 (Archaeoglobus fulgidus (strain ATCC 49558 / DSM 4304 / JCM 9628 / NBRC 100126 / VC-16)).